The primary structure comprises 1088 residues: Serine/threonine-protein kinase 11-interacting protein (1088 aa).

LRR repeat units follow at residues 109–130, 132–152, 164–185, 187–209, 210–231, 233–254, 255–276, and 280–301; these read SLRH…RGIY, QLET…LSAC, ALLS…LRLL, ALRF…MDLC, ELHH…GPSG, ALGV…EQLR, NLRH…SPLW, and ELRK…RAAT. 2 disordered regions span residues 335–407 and 437–533; these read GLSP…SPAG and LEPS…QKEV. Residues 346-367 are compositionally biased toward low complexity; it reads PVGSTPETSGGPDLSDSLSSGG. Residues 375 to 385 are compositionally biased toward basic residues; the sequence is HKVKSRVRVRR. 3 positions are modified to phosphoserine: Ser387, Ser389, and Ser392. Residues 447 to 460 are compositionally biased toward low complexity; it reads TPTTSAPSAPPASS. Phosphoserine is present on Ser470. Residues 508 to 529 show a composition bias toward acidic residues; it reads EEGEMVEQGEEEAGEEEEEEQD. Ser599 carries the phosphoserine modification. 2 disordered regions span residues 724–780 and 978–1009; these read TPNR…SPPP and DAAG…PAVR. Over residues 733–742 the composition is skewed to polar residues; sequence EQSLAPSPSA. Basic and acidic residues predominate over residues 750–759; it reads GHGDHLDRAK. Residues Ser761, Ser773, and Ser777 each carry the phosphoserine modification. The segment covering 978-994 has biased composition (low complexity); the sequence is DAAGSPAEPSPPAASGE.

This sequence belongs to the STK11IP family. As to quaternary structure, found in a ternary complex composed of STK11/LKB1, STK11IP and SMAD4. Interacts with STK11/LKB1 and SMAD4.

The protein localises to the cytoplasm. In terms of biological role, may regulate STK11/LKB1 function by controlling its subcellular localization. This is Serine/threonine-protein kinase 11-interacting protein (STK11IP) from Homo sapiens (Human).